A 224-amino-acid polypeptide reads, in one-letter code: Urease accessory protein UreF (224 aa).

This sequence belongs to the UreF family. In terms of assembly, ureD, UreF and UreG form a complex that acts as a GTP-hydrolysis-dependent molecular chaperone, activating the urease apoprotein by helping to assemble the nickel containing metallocenter of UreC. The UreE protein probably delivers the nickel.

The protein localises to the cytoplasm. Functionally, required for maturation of urease via the functional incorporation of the urease nickel metallocenter. This chain is Urease accessory protein UreF, found in Pseudomonas putida (strain ATCC 47054 / DSM 6125 / CFBP 8728 / NCIMB 11950 / KT2440).